We begin with the raw amino-acid sequence, 367 residues long: uncharacterized protein (367 aa).

Residues 333–367 are disordered; sequence RERRPTLNAQRAHAAAQQQPRRRNRRQQGTGASAS. Low complexity predominate over residues 341–351; sequence AQRAHAAAQQQ.

This is an uncharacterized protein from Amazona oratrix (yellow-headed parrot).